A 436-amino-acid chain; its full sequence is Eukaryotic translation initiation factor 5 (436 aa).

27–34 (GKGNGIKT) is a binding site for GTP. Residues 177–203 (NSDKGSSNDDDDDDWEPEPVEPNGMLS) form a disordered region. The segment covering 184–195 (NDDDDDDWEPEP) has biased composition (acidic residues). The region spanning 216-379 (EKSEEQRLDM…KEAEEETEEE (164 aa)) is the W2 domain. Residues 396–408 (LRQQKEKAAREAQ) show a composition bias toward basic and acidic residues. A disordered region spans residues 396–436 (LRQQKEKAAREAQQKSAKATNGNAAAASGANDEEDLDIDDI). Over residues 409 to 425 (QKSAKATNGNAAAASGA) the composition is skewed to low complexity. A compositionally biased stretch (acidic residues) spans 426-436 (NDEEDLDIDDI).

The protein belongs to the eIF-2-beta/eIF-5 family.

Its function is as follows. Catalyzes the hydrolysis of GTP bound to the 40S ribosomal initiation complex (40S.mRNA.Met-tRNA[F].eIF-2.GTP) with the subsequent joining of a 60S ribosomal subunit resulting in the release of eIF-2 and the guanine nucleotide. The subsequent joining of a 60S ribosomal subunit results in the formation of a functional 80S initiation complex (80S.mRNA.Met-tRNA[F]). In Caenorhabditis elegans, this protein is Eukaryotic translation initiation factor 5.